We begin with the raw amino-acid sequence, 147 residues long: Prefoldin subunit alpha (147 aa).

The protein belongs to the prefoldin alpha subunit family. In terms of assembly, heterohexamer of two alpha and four beta subunits.

It is found in the cytoplasm. Molecular chaperone capable of stabilizing a range of proteins. Seems to fulfill an ATP-independent, HSP70-like function in archaeal de novo protein folding. This Saccharolobus islandicus (strain M.16.27) (Sulfolobus islandicus) protein is Prefoldin subunit alpha.